The following is a 323-amino-acid chain: MTKTFANPQLTKNGELKHLLSIEGLSRDILTHILDTAKQFVSVSDADREVKKVPLLRGKSVFNLFFENSTRTRTTFEIAAKRLSADVINLNINASSTSKGESLLDTINNLSAMQADMFVVRHASSGAPYLIAEHVAPHVHVINAGDGRHAHPTQGLLDMFTIRHYKKDFSNLTVAIVGDILHSRVARSDIHALTTLGCAEVRAIGPRTLLPSGLEHMGVRVFHSMEEGLKGVDAVIMLRLQNERMSGALLPSAQEYFKAYGLTQERLALAKPDAIVMHPGPMNRGVEIDSAVADGVQSVILNQVTFGIAVRMAVMGIVAGNND.

Arg71 and Thr72 together coordinate carbamoyl phosphate. Lys99 is an L-aspartate binding site. The carbamoyl phosphate site is built by Arg121, His151, and Gln154. Positions 184 and 239 each coordinate L-aspartate. Carbamoyl phosphate contacts are provided by Gly280 and Pro281.

This sequence belongs to the aspartate/ornithine carbamoyltransferase superfamily. ATCase family. As to quaternary structure, heterododecamer (2C3:3R2) of six catalytic PyrB chains organized as two trimers (C3), and six regulatory PyrI chains organized as three dimers (R2).

It carries out the reaction carbamoyl phosphate + L-aspartate = N-carbamoyl-L-aspartate + phosphate + H(+). The protein operates within pyrimidine metabolism; UMP biosynthesis via de novo pathway; (S)-dihydroorotate from bicarbonate: step 2/3. In terms of biological role, catalyzes the condensation of carbamoyl phosphate and aspartate to form carbamoyl aspartate and inorganic phosphate, the committed step in the de novo pyrimidine nucleotide biosynthesis pathway. The chain is Aspartate carbamoyltransferase catalytic subunit from Ralstonia nicotianae (strain ATCC BAA-1114 / GMI1000) (Ralstonia solanacearum).